We begin with the raw amino-acid sequence, 821 residues long: Probable E3 ubiquitin-protein ligase hulA (821 aa).

In terms of domain architecture, C2 spans 1–112; the sequence is MGSNLPAQPN…QMGGDEMLTR (112 aa). Disordered stretches follow at residues 140–240 and 255–359; these read PNQA…WERR and RTTT…YFVD. 4 stretches are compositionally biased toward polar residues: residues 151–173, 181–201, 217–228, and 255–272; these read AQSS…SVSP, AASN…PTST, QGSRTNLSSFED, and RTTT…QTQR. Residues 231–264 form the WW 1 domain; it reads GRLPAGWERREDNLGRTYYVDHNTRTTTWTRPSS. Positions 281-296 are enriched in basic and acidic residues; it reads LERRAHQSRMLPEDRT. The segment covering 297-306 has biased composition (polar residues); sequence GANSPNLQES. The segment covering 311-339 has biased composition (low complexity); that stretch reads PQQAHTPPAGGSASAVSMMATGATTAGTG. 2 WW domains span residues 339–372 and 399–432; these read GELP…DPRR and GPLP…DPRL. In terms of domain architecture, HECT spans 488-821; the sequence is SASDLKKRLM…VEETLGFGQE (334 aa). The active-site Glycyl thioester intermediate is cysteine 789.

Belongs to the RSP5/NEDD4 family. As to quaternary structure, interacts with creD.

The protein resides in the cytoplasm. The catalysed reaction is S-ubiquitinyl-[E2 ubiquitin-conjugating enzyme]-L-cysteine + [acceptor protein]-L-lysine = [E2 ubiquitin-conjugating enzyme]-L-cysteine + N(6)-ubiquitinyl-[acceptor protein]-L-lysine.. It participates in protein modification; protein ubiquitination. In terms of biological role, E3 ubiquitin-protein ligase which accepts ubiquitin from an E2 ubiquitin-conjugating enzyme in the form of a thioester and then directly transfers the ubiquitin to targeted substrates. Probably involved in the regulatory network controlling carbon source utilization. The protein is Probable E3 ubiquitin-protein ligase hulA (hulA) of Aspergillus niger (strain ATCC MYA-4892 / CBS 513.88 / FGSC A1513).